A 462-amino-acid chain; its full sequence is Fumarate hydratase class II (462 aa).

Substrate contacts are provided by residues S97 to T99, H127 to D130, S137 to N139, and T185. The Proton donor/acceptor role is filled by H186. S316 is an active-site residue. Residues S317 and K322–N324 each bind substrate.

Belongs to the class-II fumarase/aspartase family. Fumarase subfamily. Homotetramer.

The protein resides in the cytoplasm. The enzyme catalyses (S)-malate = fumarate + H2O. Its pathway is carbohydrate metabolism; tricarboxylic acid cycle; (S)-malate from fumarate: step 1/1. Functionally, involved in the TCA cycle. Catalyzes the stereospecific interconversion of fumarate to L-malate. This chain is Fumarate hydratase class II, found in Bacillus cereus (strain ATCC 14579 / DSM 31 / CCUG 7414 / JCM 2152 / NBRC 15305 / NCIMB 9373 / NCTC 2599 / NRRL B-3711).